The following is a 408-amino-acid chain: Putative UPF0496 protein 2 (408 aa).

2 helical membrane-spanning segments follow: residues 224 to 244 (RIAR…AIVA) and 252 to 272 (ALVG…GAAR). Residues 385–408 (MARGLPPPSPATVTTTSEERLTSS) form a disordered region.

It belongs to the UPF0496 family.

The protein localises to the membrane. The polypeptide is Putative UPF0496 protein 2 (Oryza sativa subsp. japonica (Rice)).